The chain runs to 531 residues: Transcription factor LG2 (531 aa).

Disordered stretches follow at residues 115–154 (RHQQ…ASSA) and 195–220 (LHGG…KLVD). The segment covering 116–154 (HQQQLHSGNSQSVGSTGTDSSSAQNTMSQMELVSPASSA) has biased composition (polar residues). The bZIP domain maps to 220–264 (DAKTERRLAQNREAARKSRLRKKAYVQQLETSRIRLQQVEHELQR). The interval 222–242 (KTERRLAQNREAARKSRLRKK) is basic motif. The short motif at 224–231 (ERRLAQNR) is the Nuclear localization signal element. The tract at residues 248–262 (LETSRIRLQQVEHEL) is leucine-zipper. Residues 285–499 (AAMFDMEYAR…RALSNLWASR (215 aa)) enclose the DOG1 domain.

It belongs to the bZIP family. As to quaternary structure, binds DNA as a dimer. Expression in meristem/developing ligule regions.

Its subcellular location is the nucleus. Required for the formation of the blade-sheath boundary in leaves. Promotes flowering. The sequence is that of Transcription factor LG2 from Zea mays (Maize).